Reading from the N-terminus, the 511-residue chain is Glucans biosynthesis protein G (511 aa).

Positions 1–22 (MMKMRWLSAAVMLTLYTSSSWA) are cleaved as a signal peptide.

This sequence belongs to the OpgD/OpgG family.

The protein resides in the periplasm. It participates in glycan metabolism; osmoregulated periplasmic glucan (OPG) biosynthesis. Involved in the biosynthesis of osmoregulated periplasmic glucans (OPGs). In Escherichia coli (strain K12 / MC4100 / BW2952), this protein is Glucans biosynthesis protein G.